Consider the following 156-residue polypeptide: Small ribosomal subunit protein uS7 (156 aa).

The protein belongs to the universal ribosomal protein uS7 family. In terms of assembly, part of the 30S ribosomal subunit. Contacts proteins S9 and S11.

Functionally, one of the primary rRNA binding proteins, it binds directly to 16S rRNA where it nucleates assembly of the head domain of the 30S subunit. Is located at the subunit interface close to the decoding center, probably blocks exit of the E-site tRNA. This chain is Small ribosomal subunit protein uS7, found in Histophilus somni (strain 129Pt) (Haemophilus somnus).